We begin with the raw amino-acid sequence, 204 residues long: uncharacterized protein (204 aa).

Positions 47–108 (TDSSDDEGGA…EDSDEEGEGG (62 aa)) are disordered. Positions 49–106 (SSDDEGGASSGDEGEASSDDEGDASSDDEEEASSDGEGVVEDEETLDAEGEDSDEEGE) are enriched in acidic residues.

Its subcellular location is the mitochondrion. This is an uncharacterized protein from Paramecium tetraurelia.